A 151-amino-acid polypeptide reads, in one-letter code: Large ribosomal subunit protein uL15 (151 aa).

The disordered stretch occupies residues 1–51 (MKSLRLEDAVPQSGSRHRKLRVGRGHSAGQGKTSGRGMRGQKCRSGGGVRP). A compositionally biased stretch (basic residues) spans 15-24 (SRHRKLRVGR). Residues 26 to 38 (HSAGQGKTSGRGM) are compositionally biased toward gly residues.

Belongs to the universal ribosomal protein uL15 family. As to quaternary structure, part of the 50S ribosomal subunit.

Binds to the 23S rRNA. The protein is Large ribosomal subunit protein uL15 of Gloeobacter violaceus (strain ATCC 29082 / PCC 7421).